The sequence spans 218 residues: Adenylate kinase (218 aa).

10–15 (GAGKGT) contributes to the ATP binding site. Residues 30–59 (STGDMLRAAVKEGSELGLKVKEIMNSGGLV) are NMP. Residues T31, R36, 57-59 (GLV), 85-88 (GFPR), and Q92 each bind AMP. The tract at residues 122 to 159 (GRRVHPGSGRVYHVDYNPPKEEGKDDVTGEALIQRDDD) is LID. ATP-binding positions include R123 and 132 to 133 (VY). AMP-binding residues include R156 and R167. Residue G203 coordinates ATP.

It belongs to the adenylate kinase family. Monomer.

It localises to the cytoplasm. It catalyses the reaction AMP + ATP = 2 ADP. The protein operates within purine metabolism; AMP biosynthesis via salvage pathway; AMP from ADP: step 1/1. In terms of biological role, catalyzes the reversible transfer of the terminal phosphate group between ATP and AMP. Plays an important role in cellular energy homeostasis and in adenine nucleotide metabolism. In Chromohalobacter salexigens (strain ATCC BAA-138 / DSM 3043 / CIP 106854 / NCIMB 13768 / 1H11), this protein is Adenylate kinase.